The following is a 416-amino-acid chain: Enterobactin exporter EntS (416 aa).

At 1-21 (MNKQSWLLNLSLLKTHPAFRA) the chain is on the cytoplasmic side. A helical transmembrane segment spans residues 22–42 (VFLARFISIVSLGLLGVAVPV). Residues 43–55 (QIQMMTHSTWQVG) are Periplasmic-facing. A helical membrane pass occupies residues 56–76 (LSVTLTGGAMFVGLMVGGVLA). Topologically, residues 77 to 83 (DRYERKK) are cytoplasmic. The helical transmembrane segment at 84 to 104 (VILLARGTCGIGFIGLCLNAL) threads the bilayer. Over 105-109 (LPEPS) the chain is Periplasmic. The chain crosses the membrane as a helical span at residues 110–130 (LLAIYLLGLWDGFFASLGVTA). The Cytoplasmic portion of the chain corresponds to 131 to 156 (LLAATPALVGRENLMQAGAITMLTVR). A helical transmembrane segment spans residues 157–177 (LGSVNSPMIGGLLLAIGGVAW). Asn-178 is a topological domain (periplasmic). Residues 179-199 (YGLAAAGTFITLLPLLSLPAL) form a helical membrane-spanning segment. Residues 200–218 (PPPPQPREHPLKSLLAGFR) lie on the Cytoplasmic side of the membrane. Residues 219-239 (FLLASPLVGGIALLGGLLTMA) form a helical membrane-spanning segment. The Periplasmic segment spans residues 240 to 256 (SAVRVLYPALADNWQMS). A helical membrane pass occupies residues 257–277 (AAQIGFLYAAIPLGAAIGALT). The Cytoplasmic segment spans residues 278–287 (SGKLAHSARP). Residues 288 to 307 (GLLMLLSTLGSFLAIGLFGL) form a helical membrane-spanning segment. Over 308 to 313 (MPMWIL) the chain is Periplasmic. The chain crosses the membrane as a helical span at residues 314 to 336 (GVVCLALFGWLSAVSSLLQYTML). The Cytoplasmic portion of the chain corresponds to 337 to 356 (QTQTPEVMLGRINGLWTAQN). The chain crosses the membrane as a helical span at residues 357 to 377 (VTGDAIGAALLGGLGAMMTPV). A topological domain (periplasmic) is located at residue Ala-378. The chain crosses the membrane as a helical span at residues 379–399 (SASASGFGLLIIGVLLLLVLV). Topologically, residues 400 to 416 (ELRHFRQTPPQVTASDS) are cytoplasmic.

Belongs to the major facilitator superfamily. EntS (TC 2.A.1.38) family.

The protein localises to the cell inner membrane. Component of an export pathway for enterobactin. This is Enterobactin exporter EntS from Shigella dysenteriae serotype 1 (strain Sd197).